The sequence spans 283 residues: DegV domain-containing protein BH3627 (283 aa).

The region spanning 4–281 (IAIVTDSTAY…EGSIGLSWYI (278 aa)) is the DegV domain. 2 residues coordinate hexadecanoate: Thr62 and Ser95.

Functionally, may bind long-chain fatty acids, such as palmitate, and may play a role in lipid transport or fatty acid metabolism. This Halalkalibacterium halodurans (strain ATCC BAA-125 / DSM 18197 / FERM 7344 / JCM 9153 / C-125) (Bacillus halodurans) protein is DegV domain-containing protein BH3627.